A 231-amino-acid polypeptide reads, in one-letter code: Probable intron-encoded endonuclease 1 (231 aa).

It belongs to the LAGLIDADG endonuclease family.

Its subcellular location is the mitochondrion. Endonuclease involved in mitochondrial 21S rRNA gene intron homing. The polypeptide is Probable intron-encoded endonuclease 1 (Wickerhamomyces canadensis (Yeast)).